Reading from the N-terminus, the 440-residue chain is Deoxyguanosinetriphosphate triphosphohydrolase-like protein (440 aa).

An HD domain is found at 61–256 (RLIHSLEVSC…MEAADDLCYS (196 aa)).

This sequence belongs to the dGTPase family. Type 3 subfamily.

The protein is Deoxyguanosinetriphosphate triphosphohydrolase-like protein of Synechocystis sp. (strain ATCC 27184 / PCC 6803 / Kazusa).